The chain runs to 382 residues: MPLIAISYSHGKLSILNQLFLPHQTTYDPIYSACDAWHAIHDMRVRGAPAIAIVAALSLAVELYDLIQKGKLSDQAKEVEIFIREKLEYIASSRPTAVNLVEAAGRLGKIVVARSCGEGVTGREVAEEYIRAAEKMLEDDVKDNRGIGEFGAKWIMKQAIDGAEGKGKVAVLTHCNTGSLATAGYGTALGVIRSLHAANSLKHAYCTETRPYNQGSRLTAYELVHDNIPATLITDSMAAALLAHKSAGVGAIVVGADRVAANGDTANKIGTYGLAVLAKHHGVKFLVAAPRTTIDMNTKSGEGIAIEERPRQEMTRIRGPRVGGEQDGLGAMETITVAADGIDVWNPAFDVTPASLIDGIITEIGVVEKDRDGEFHLERVFE.

Residue Asp-257 is the Proton donor of the active site.

It belongs to the eIF-2B alpha/beta/delta subunits family. MtnA subfamily.

The protein resides in the cytoplasm. It is found in the nucleus. It catalyses the reaction 5-(methylsulfanyl)-alpha-D-ribose 1-phosphate = 5-(methylsulfanyl)-D-ribulose 1-phosphate. It functions in the pathway amino-acid biosynthesis; L-methionine biosynthesis via salvage pathway; L-methionine from S-methyl-5-thio-alpha-D-ribose 1-phosphate: step 1/6. Catalyzes the interconversion of methylthioribose-1-phosphate (MTR-1-P) into methylthioribulose-1-phosphate (MTRu-1-P). The polypeptide is Methylthioribose-1-phosphate isomerase (Paracoccidioides brasiliensis (strain Pb18)).